The sequence spans 212 residues: uncharacterized protein (212 aa).

The SIS domain maps to 46-198; sequence LERVYREKRK…IYSLMTRLGI (153 aa).

Belongs to the SIS family. PHI subfamily.

This is an uncharacterized protein from Aeropyrum pernix (strain ATCC 700893 / DSM 11879 / JCM 9820 / NBRC 100138 / K1).